Reading from the N-terminus, the 403-residue chain is Phosphoglycerate kinase (403 aa).

Residues 22–24, R37, 60–63, R119, and R156 each bind substrate; these read DLN and HLGR. ATP is bound by residues K206, G302, E333, and 359–362; that span reads GGDS.

Belongs to the phosphoglycerate kinase family. As to quaternary structure, monomer.

It localises to the cytoplasm. The catalysed reaction is (2R)-3-phosphoglycerate + ATP = (2R)-3-phospho-glyceroyl phosphate + ADP. Its pathway is carbohydrate degradation; glycolysis; pyruvate from D-glyceraldehyde 3-phosphate: step 2/5. This is Phosphoglycerate kinase from Streptomyces avermitilis (strain ATCC 31267 / DSM 46492 / JCM 5070 / NBRC 14893 / NCIMB 12804 / NRRL 8165 / MA-4680).